Consider the following 599-residue polypeptide: Aspartate--tRNA ligase (599 aa).

Residue glutamate 180 participates in L-aspartate binding. The aspartate stretch occupies residues 204 to 207; the sequence is QIFK. Residue arginine 226 participates in L-aspartate binding. ATP contacts are provided by residues 226–228 and glutamine 235; that span reads RDE. L-aspartate is bound at residue histidine 454. An ATP-binding site is contributed by glutamate 488. Residue arginine 495 coordinates L-aspartate. 540-543 contributes to the ATP binding site; that stretch reads GLDR.

The protein belongs to the class-II aminoacyl-tRNA synthetase family. Type 1 subfamily. In terms of assembly, homodimer.

The protein resides in the cytoplasm. It catalyses the reaction tRNA(Asp) + L-aspartate + ATP = L-aspartyl-tRNA(Asp) + AMP + diphosphate. Functionally, catalyzes the attachment of L-aspartate to tRNA(Asp) in a two-step reaction: L-aspartate is first activated by ATP to form Asp-AMP and then transferred to the acceptor end of tRNA(Asp). This chain is Aspartate--tRNA ligase, found in Clostridium beijerinckii (strain ATCC 51743 / NCIMB 8052) (Clostridium acetobutylicum).